Reading from the N-terminus, the 935-residue chain is 2-oxoglutarate dehydrogenase E1 component (935 aa).

This sequence belongs to the alpha-ketoglutarate dehydrogenase family. In terms of assembly, homodimer. Part of the 2-oxoglutarate dehydrogenase (OGDH) complex composed of E1 (2-oxoglutarate dehydrogenase), E2 (dihydrolipoamide succinyltransferase) and E3 (dihydrolipoamide dehydrogenase); the complex contains multiple copies of the three enzymatic components (E1, E2 and E3). The cofactor is thiamine diphosphate.

The catalysed reaction is N(6)-[(R)-lipoyl]-L-lysyl-[protein] + 2-oxoglutarate + H(+) = N(6)-[(R)-S(8)-succinyldihydrolipoyl]-L-lysyl-[protein] + CO2. In terms of biological role, E1 component of the 2-oxoglutarate dehydrogenase (OGDH) complex which catalyzes the decarboxylation of 2-oxoglutarate, the first step in the conversion of 2-oxoglutarate to succinyl-CoA and CO(2). The polypeptide is 2-oxoglutarate dehydrogenase E1 component (sucA) (Haemophilus influenzae (strain ATCC 51907 / DSM 11121 / KW20 / Rd)).